The primary structure comprises 386 residues: Lipid-A-disaccharide synthase (386 aa).

This sequence belongs to the LpxB family.

It carries out the reaction a lipid X + a UDP-2-N,3-O-bis[(3R)-3-hydroxyacyl]-alpha-D-glucosamine = a lipid A disaccharide + UDP + H(+). It functions in the pathway bacterial outer membrane biogenesis; LPS lipid A biosynthesis. Condensation of UDP-2,3-diacylglucosamine and 2,3-diacylglucosamine-1-phosphate to form lipid A disaccharide, a precursor of lipid A, a phosphorylated glycolipid that anchors the lipopolysaccharide to the outer membrane of the cell. This chain is Lipid-A-disaccharide synthase, found in Chromohalobacter salexigens (strain ATCC BAA-138 / DSM 3043 / CIP 106854 / NCIMB 13768 / 1H11).